Here is a 212-residue protein sequence, read N- to C-terminus: Large ribosomal subunit protein uL3 (212 aa).

The interval 131 to 155 (RGNMTHGSKNHRLPGSTGAGTTPGR) is disordered.

The protein belongs to the universal ribosomal protein uL3 family. As to quaternary structure, part of the 50S ribosomal subunit. Forms a cluster with proteins L14 and L19.

Its function is as follows. One of the primary rRNA binding proteins, it binds directly near the 3'-end of the 23S rRNA, where it nucleates assembly of the 50S subunit. The sequence is that of Large ribosomal subunit protein uL3 from Microcystis aeruginosa (strain NIES-843 / IAM M-2473).